Reading from the N-terminus, the 145-residue chain is 6-pyruvoyl tetrahydrobiopterin synthase (145 aa).

Ser-19 bears the Phosphoserine mark. A Zn(2+)-binding site is contributed by His-24. At Ser-28 the chain carries Phosphoserine. Catalysis depends on Cys-43, which acts as the Proton acceptor. Residues His-49 and His-51 each contribute to the Zn(2+) site. His-90 functions as the Charge relay system in the catalytic mechanism. Tyr-128 is subject to Phosphotyrosine. Residue Glu-134 is the Charge relay system of the active site.

It belongs to the PTPS family. Homohexamer formed of two homotrimers in a head to head fashion. It depends on Zn(2+) as a cofactor. Post-translationally, phosphorylation of Ser-19 is required for maximal enzyme activity.

It catalyses the reaction 7,8-dihydroneopterin 3'-triphosphate = 6-pyruvoyl-5,6,7,8-tetrahydropterin + triphosphate + H(+). The protein operates within cofactor biosynthesis; tetrahydrobiopterin biosynthesis; tetrahydrobiopterin from 7,8-dihydroneopterin triphosphate: step 1/3. Involved in the biosynthesis of tetrahydrobiopterin, an essential cofactor of aromatic amino acid hydroxylases. Catalyzes the transformation of 7,8-dihydroneopterin triphosphate into 6-pyruvoyl tetrahydropterin. The polypeptide is 6-pyruvoyl tetrahydrobiopterin synthase (PTS) (Pongo abelii (Sumatran orangutan)).